The following is a 185-amino-acid chain: Ribosome-recycling factor (185 aa).

The protein belongs to the RRF family.

The protein resides in the cytoplasm. Responsible for the release of ribosomes from messenger RNA at the termination of protein biosynthesis. May increase the efficiency of translation by recycling ribosomes from one round of translation to another. In Corynebacterium urealyticum (strain ATCC 43042 / DSM 7109), this protein is Ribosome-recycling factor.